Here is a 314-residue protein sequence, read N- to C-terminus: Bis(5'-nucleosyl)-tetraphosphatase, symmetrical (314 aa).

The tract at residues 267 to 314 (QVPGNPITHPPKTAQRPRQPRRRQRQRGGDQAQTGPAPTPASTGPAGG) is disordered. Over residues 297 to 314 (QAQTGPAPTPASTGPAGG) the composition is skewed to low complexity.

This sequence belongs to the Ap4A hydrolase family.

It carries out the reaction P(1),P(4)-bis(5'-adenosyl) tetraphosphate + H2O = 2 ADP + 2 H(+). In terms of biological role, hydrolyzes diadenosine 5',5'''-P1,P4-tetraphosphate to yield ADP. This is Bis(5'-nucleosyl)-tetraphosphatase, symmetrical from Xanthomonas axonopodis pv. citri (strain 306).